The sequence spans 393 residues: Dual specificity mitogen-activated protein kinase kinase 1 (393 aa).

Residues 1 to 26 (MPKKKPTPIQLNPTPDGSAVNGTSSA) are disordered. Positions 9–26 (IQLNPTPDGSAVNGTSSA) are enriched in polar residues. The Protein kinase domain maps to 68-361 (FEKISELGAG…LKQLLVHAFI (294 aa)). Residues 74–82 (LGAGNGGVV) and lysine 97 contribute to the ATP site. Aspartate 190 functions as the Proton acceptor in the catalytic mechanism. Phosphoserine; by RAF is present on residues serine 218 and serine 222. Residues 270-307 (ELELLFGCQVEGDAAETPPRPRTPGRPLSSYGMDSRPP) form an RAF1-binding region. Threonine 286 is modified (phosphothreonine). The residue at position 292 (threonine 292) is a Phosphothreonine; by MAPK1. The residue at position 298 (serine 298) is a Phosphoserine; by PAK.

The protein belongs to the protein kinase superfamily. STE Ser/Thr protein kinase family. MAP kinase kinase subfamily. As to quaternary structure, found in a complex with at least BRAF, HRAS, MAP2K1, MAPK3/ERK1 and RGS14. Forms a heterodimer with MAP2K2/MEK2. Forms heterodimers with KSR2 which further dimerize to form tetramers. Interacts with KSR1 or KSR2 and BRAF; the interaction with KSR1 or KSR2 mediates KSR1-BRAF or KSR2-BRAF dimerization. Interacts with ARBB2, LAMTOR3, MAPK1/ERK2 and RAF1. Interacts with MAPK1/ERK2. Interacts with MORG1. Interacts with PPARG. Interacts with isoform 1 of VRK2. Interacts with SGK1. Interacts with BIRC6/bruce. Interacts with KAT7; the interaction promotes KAT7 phosphorylation. Interacts with RAF1 and NEK10; the interaction is required for ERK1/2-signaling pathway activation in response to UV irradiation. Interacts with TRAF3IP3. Interacts with MOS. Phosphorylation at Ser-218 and Ser-222 by MAP kinase kinase kinases (BRAF or MEKK1) positively regulates the kinase activity. Also phosphorylated at Thr-292 by MAPK1/ERK2 and at Ser-298 by PAK. MAPK1/ERK2 phosphorylation of Thr-292 occurs in response to cellular adhesion and leads to inhibition of Ser-298 phosphorylation by PAK. Autophosphorylated at Ser-218 and Ser-222, autophosphosphorylation is promoted by NEK10 following UV irradiation.

It is found in the cytoplasm. The protein localises to the cytoskeleton. It localises to the microtubule organizing center. Its subcellular location is the centrosome. The protein resides in the spindle pole body. It is found in the nucleus. The protein localises to the membrane. The catalysed reaction is L-seryl-[protein] + ATP = O-phospho-L-seryl-[protein] + ADP + H(+). The enzyme catalyses L-threonyl-[protein] + ATP = O-phospho-L-threonyl-[protein] + ADP + H(+). It carries out the reaction L-tyrosyl-[protein] + ATP = O-phospho-L-tyrosyl-[protein] + ADP + H(+). Ras proteins such as HRAS mediate the activation of RAF proteins such as RAF1 or BRAF which in turn activate extracellular signal-regulated kinases (ERK) through MAPK (mitogen-activated protein kinases) and ERK kinases MAP2K1/MEK1 and MAP2K2/MEK2. Activation occurs through phosphorylation of Ser-218 and Ser-222. MAP2K1/MEK1 binds KSR1 or KSR2 releasing the inhibitory intramolecular interaction between KSR1 or KSR2 protein kinase and N-terminal domains. This allows KSR1 or KSR2 dimerization with BRAF leading to BRAF activation and phosphorylation of MAP2K1. MAP2K1/MEK1 is also the target of negative feed-back regulation by its substrate kinases, such as MAPK1/ERK2. These phosphorylate MAP2K1/MEK1 on Thr-292, thereby facilitating dephosphorylation of the activating residues Ser-218 and Ser-222. Inhibited by serine/threonine phosphatase 2A. Functionally, dual specificity protein kinase which acts as an essential component of the MAP kinase signal transduction pathway. Binding of extracellular ligands such as growth factors, cytokines and hormones to their cell-surface receptors activates RAS and this initiates RAF1 activation. RAF1 then further activates the dual-specificity protein kinases MAP2K1/MEK1 and MAP2K2/MEK2. Both MAP2K1/MEK1 and MAP2K2/MEK2 function specifically in the MAPK/ERK cascade, and catalyze the concomitant phosphorylation of a threonine and a tyrosine residue in a Thr-Glu-Tyr sequence located in the extracellular signal-regulated kinases MAPK3/ERK1 and MAPK1/ERK2, leading to their activation and further transduction of the signal within the MAPK/ERK cascade. Activates BRAF in a KSR1 or KSR2-dependent manner; by binding to KSR1 or KSR2 releases the inhibitory intramolecular interaction between KSR1 or KSR2 protein kinase and N-terminal domains which promotes KSR1 or KSR2-BRAF dimerization and BRAF activation. Depending on the cellular context, this pathway mediates diverse biological functions such as cell growth, adhesion, survival and differentiation, predominantly through the regulation of transcription, metabolism and cytoskeletal rearrangements. One target of the MAPK/ERK cascade is peroxisome proliferator-activated receptor gamma (PPARG), a nuclear receptor that promotes differentiation and apoptosis. MAP2K1/MEK1 has been shown to export PPARG from the nucleus. The MAPK/ERK cascade is also involved in the regulation of endosomal dynamics, including lysosome processing and endosome cycling through the perinuclear recycling compartment (PNRC), as well as in the fragmentation of the Golgi apparatus during mitosis. In Cricetulus griseus (Chinese hamster), this protein is Dual specificity mitogen-activated protein kinase kinase 1 (MAP2K1).